The chain runs to 357 residues: Probable cinnamyl alcohol dehydrogenase 7/8 (357 aa).

Residue cysteine 47 coordinates Zn(2+). Serine 49 contributes to the NADP(+) binding site. Residues histidine 69, glutamate 70, cysteine 100, cysteine 103, cysteine 106, cysteine 114, and cysteine 163 each contribute to the Zn(2+) site. NADP(+) contacts are provided by residues threonine 167, 188-193 (GLGGVG), 211-216 (SSSDKK), threonine 251, glycine 275, and 298-300 (SFI).

This sequence belongs to the zinc-containing alcohol dehydrogenase family. As to quaternary structure, homodimer. Requires Zn(2+) as cofactor.

It carries out the reaction (E)-cinnamyl alcohol + NADP(+) = (E)-cinnamaldehyde + NADPH + H(+). The catalysed reaction is (E)-coniferol + NADP(+) = (E)-coniferaldehyde + NADPH + H(+). The enzyme catalyses (E)-sinapyl alcohol + NADP(+) = (E)-sinapaldehyde + NADPH + H(+). It catalyses the reaction (E)-4-coumaroyl alcohol + NADP(+) = (E)-4-coumaraldehyde + NADPH + H(+). It carries out the reaction (E)-caffeyl alcohol + NADP(+) = (E)-caffeyl aldehyde + NADPH + H(+). The protein operates within aromatic compound metabolism; phenylpropanoid biosynthesis. Its function is as follows. Involved in lignin biosynthesis. Catalyzes the final step specific for the production of lignin monomers. Catalyzes the NADPH-dependent reduction of coniferaldehyde, 5-hydroxyconiferaldehyde, sinapaldehyde, 4-coumaraldehyde and caffeyl aldehyde to their respective alcohols. The protein is Probable cinnamyl alcohol dehydrogenase 7/8 (CAD7) of Picea abies (Norway spruce).